The following is a 156-amino-acid chain: 6,7-dimethyl-8-ribityllumazine synthase (156 aa).

5-amino-6-(D-ribitylamino)uracil-binding positions include Phe-22, 56 to 58, and 80 to 82; these read AFE and AVV. 85-86 contributes to the (2S)-2-hydroxy-3-oxobutyl phosphate binding site; the sequence is ET. Catalysis depends on His-88, which acts as the Proton donor. 5-amino-6-(D-ribitylamino)uracil is bound at residue Phe-113. Position 127 (Arg-127) interacts with (2S)-2-hydroxy-3-oxobutyl phosphate.

Belongs to the DMRL synthase family.

The catalysed reaction is (2S)-2-hydroxy-3-oxobutyl phosphate + 5-amino-6-(D-ribitylamino)uracil = 6,7-dimethyl-8-(1-D-ribityl)lumazine + phosphate + 2 H2O + H(+). It functions in the pathway cofactor biosynthesis; riboflavin biosynthesis; riboflavin from 2-hydroxy-3-oxobutyl phosphate and 5-amino-6-(D-ribitylamino)uracil: step 1/2. Its function is as follows. Catalyzes the formation of 6,7-dimethyl-8-ribityllumazine by condensation of 5-amino-6-(D-ribitylamino)uracil with 3,4-dihydroxy-2-butanone 4-phosphate. This is the penultimate step in the biosynthesis of riboflavin. In Pediococcus pentosaceus (strain ATCC 25745 / CCUG 21536 / LMG 10740 / 183-1w), this protein is 6,7-dimethyl-8-ribityllumazine synthase.